Consider the following 159-residue polypeptide: Transcription elongation factor GreA (159 aa).

A coiled-coil region spans residues 14 to 76; sequence VKKLEEELEY…QLENMLRNAN (63 aa).

This sequence belongs to the GreA/GreB family.

In terms of biological role, necessary for efficient RNA polymerase transcription elongation past template-encoded arresting sites. The arresting sites in DNA have the property of trapping a certain fraction of elongating RNA polymerases that pass through, resulting in locked ternary complexes. Cleavage of the nascent transcript by cleavage factors such as GreA or GreB allows the resumption of elongation from the new 3'terminus. GreA releases sequences of 2 to 3 nucleotides. In Clostridium novyi (strain NT), this protein is Transcription elongation factor GreA.